The following is a 310-amino-acid chain: Porphobilinogen deaminase (310 aa).

Cys243 carries the S-(dipyrrolylmethanemethyl)cysteine modification.

The protein belongs to the HMBS family. As to quaternary structure, monomer. The cofactor is dipyrromethane.

It catalyses the reaction 4 porphobilinogen + H2O = hydroxymethylbilane + 4 NH4(+). The protein operates within porphyrin-containing compound metabolism; protoporphyrin-IX biosynthesis; coproporphyrinogen-III from 5-aminolevulinate: step 2/4. Its function is as follows. Tetrapolymerization of the monopyrrole PBG into the hydroxymethylbilane pre-uroporphyrinogen in several discrete steps. This Mannheimia succiniciproducens (strain KCTC 0769BP / MBEL55E) protein is Porphobilinogen deaminase.